The primary structure comprises 713 residues: Oligopeptidase PhomG (713 aa).

Histidine 461 contacts Zn(2+). Residue glutamate 462 is part of the active site. The Zn(2+) site is built by histidine 465 and histidine 468.

This sequence belongs to the peptidase M3 family. In terms of assembly, monomer. It depends on Zn(2+) as a cofactor.

Its pathway is mycotoxin biosynthesis. Oligopeptidase; part of the gene cluster that mediates the biosynthesis of the phomopsins, a group of hexapeptide mycotoxins which infects lupins and causes lupinosis disease in livestock. Within the pathway, phomG and phomG' are probably involved in the processing of the phomA and phomA' precursors. The pathway starts with the processing of the precursor phomA by several endopeptidases including kexin proteases as well as the cluster-specific S41 family peptidase phomP1 and the oligopeptidase phomG to produce 10 identical copies of the hexapeptide Tyr-Val-Ile-Pro-Ile-Asp. After being excised from the precursor peptide, the core peptides are cyclized and modified post-translationally by enzymes encoded within the gene cluster. The timing and order of proteolysis of the phomA precursor and PTMs are still unknown. Two tyrosinase-like enzymes, phomQ1 and phomQ2, catalyze the chlorination and hydroxylation of Tyr, respectively. PhomYb, is proposed to be involved in the construction of the macrocyclic structure. The other 4 ustYa family proteins may be involved in PTMs that generate the unique structure of phomopsin A. PhomYa is required for the hydroxylation of C-beta of Tyr. PhomYc, phomYd, and phomYe are responsible for the biosynthesis of 2,3-dehydroisoleucine (dIle), 2,3-dehydroaspartic acid (dAsp), and 3,4-dehydroproline (dPro), respectively. While dIle formation by phomYc is indispensable for the installation of dAsp by phomYd, the order of the other PTMs have not been elucidated yet. Most of the biosynthetic enzymes likely have broad substrate specificity, and thus, there might be a metabolic grid from a precursor to phomopsin A. The enzyme(s) responsible for the biosynthesis of 3,4-dehydrovaline (dVal) have also not been identified yet. Finally, phomM acts as an S-adenosylmethionine-dependent alpha-N-methyltransferase that catalyzes two successive N-methylation reactions, converting N-desmethyl-phomopsin A to phomopsin A and phomopsin A further to an N,N-dimethylated congener called phomopsin E. The chain is Oligopeptidase PhomG from Diaporthe leptostromiformis (Lupinosis disease fungus).